The sequence spans 101 residues: Peroxisomal biogenesis factor 39 (101 aa).

The protein localises to the peroxisome. May be a peroxin involved in the PTS2-mediated protein import pathway. The chain is Peroxisomal biogenesis factor 39 from Homo sapiens (Human).